A 333-amino-acid chain; its full sequence is Putative pectinesterase 14 (333 aa).

Residues Met-1–Ser-16 form the signal peptide. Residues Asn-108 and Asn-114 are each glycosylated (N-linked (GlcNAc...) asparagine). Thr-116 is a substrate binding site. N-linked (GlcNAc...) asparagine glycosylation is present at Asn-133. Gln-151 lines the substrate pocket. Asp-174 serves as the catalytic Proton donor. The Nucleophile role is filled by Asp-195. Arg-253 serves as a coordination point for substrate. N-linked (GlcNAc...) asparagine glycans are attached at residues Asn-302 and Asn-323.

Belongs to the pectinesterase family. Expressed in flower buds.

The protein resides in the secreted. Its subcellular location is the cell wall. The enzyme catalyses [(1-&gt;4)-alpha-D-galacturonosyl methyl ester](n) + n H2O = [(1-&gt;4)-alpha-D-galacturonosyl](n) + n methanol + n H(+). It functions in the pathway glycan metabolism; pectin degradation; 2-dehydro-3-deoxy-D-gluconate from pectin: step 1/5. Acts in the modification of cell walls via demethylesterification of cell wall pectin. This is Putative pectinesterase 14 (PME14) from Arabidopsis thaliana (Mouse-ear cress).